The primary structure comprises 80 residues: Cell division protein ZapB (80 aa).

A coiled-coil region spans residues 3 to 80 (LEILEQLEAK…GLLGKMEEVE (78 aa)). The interval 41 to 62 (LEQANNGRSEVEQEAQKARDEQ) is disordered. The segment covering 49–62 (SEVEQEAQKARDEQ) has biased composition (basic and acidic residues).

Belongs to the ZapB family. In terms of assembly, homodimer. The ends of the coiled-coil dimer bind to each other, forming polymers. Interacts with FtsZ.

Its subcellular location is the cytoplasm. Non-essential, abundant cell division factor that is required for proper Z-ring formation. It is recruited early to the divisome by direct interaction with FtsZ, stimulating Z-ring assembly and thereby promoting cell division earlier in the cell cycle. Its recruitment to the Z-ring requires functional FtsA or ZipA. This chain is Cell division protein ZapB, found in Aliivibrio salmonicida (strain LFI1238) (Vibrio salmonicida (strain LFI1238)).